A 360-amino-acid polypeptide reads, in one-letter code: tRNA (guanine(37)-N(1))-methyltransferase (360 aa).

S-adenosyl-L-methionine-binding positions include Arg197, 235 to 236 (DL), and Asn283.

This sequence belongs to the class I-like SAM-binding methyltransferase superfamily. TRM5/TYW2 family. In terms of assembly, monomer.

It localises to the mitochondrion matrix. The protein localises to the nucleus. Its subcellular location is the cytoplasm. The catalysed reaction is guanosine(37) in tRNA + S-adenosyl-L-methionine = N(1)-methylguanosine(37) in tRNA + S-adenosyl-L-homocysteine + H(+). In terms of biological role, specifically methylates the N1 position of guanosine-37 in various cytoplasmic and mitochondrial tRNAs. Methylation is not dependent on the nature of the nucleoside 5' of the target nucleoside. This is the first step in the biosynthesis of wybutosine (yW), a modified base adjacent to the anticodon of tRNAs and required for accurate decoding. The polypeptide is tRNA (guanine(37)-N(1))-methyltransferase (Encephalitozoon cuniculi (strain GB-M1) (Microsporidian parasite)).